We begin with the raw amino-acid sequence, 215 residues long: MKLLGEKFPSMEVMTTHGVKRLPEDYAGKWFVLFSHPADFTPVCTTEFVEFARKAEEFKQLNTELIGLSVDQVFSHIKWVEWIKDNTGVQIPFPVIADELGRVSNQLGMIHPGKGTNTVRAVFIVDDKGVIRLIMYYPQEVGRNVDEILRALKALQTADQYGVALPEKWPNNYLIKDHVIVPPSTDEASANERKEKIKAKEIEAFDWWFVHKPLK.

Positions 2–157 (KLLGEKFPSM…ILRALKALQT (156 aa)) constitute a Thioredoxin domain. C44 (cysteine sulfenic acid (-SOH) intermediate) is an active-site residue. R120 serves as a coordination point for substrate.

It belongs to the peroxiredoxin family. Prx6 subfamily. In terms of assembly, homodecamer. Pentamer of dimers that assemble into a ring structure.

It localises to the cytoplasm. It catalyses the reaction a hydroperoxide + [thioredoxin]-dithiol = an alcohol + [thioredoxin]-disulfide + H2O. Functionally, thiol-specific peroxidase that catalyzes the reduction of hydrogen peroxide and organic hydroperoxides to water and alcohols, respectively. Plays a role in cell protection against oxidative stress by detoxifying peroxides. The sequence is that of Peroxiredoxin 1 from Caldanaerobacter subterraneus subsp. tengcongensis (strain DSM 15242 / JCM 11007 / NBRC 100824 / MB4) (Thermoanaerobacter tengcongensis).